A 436-amino-acid chain; its full sequence is 3-ketoacyl-CoA thiolase (436 aa).

Cys99 acts as the Acyl-thioester intermediate in catalysis. Active-site proton acceptor residues include His392 and Cys422.

It belongs to the thiolase-like superfamily. Thiolase family. In terms of assembly, heterotetramer of two alpha chains (FadJ) and two beta chains (FadI).

The protein resides in the cytoplasm. The catalysed reaction is an acyl-CoA + acetyl-CoA = a 3-oxoacyl-CoA + CoA. It functions in the pathway lipid metabolism; fatty acid beta-oxidation. Its function is as follows. Catalyzes the final step of fatty acid oxidation in which acetyl-CoA is released and the CoA ester of a fatty acid two carbons shorter is formed. In Shigella dysenteriae serotype 1 (strain Sd197), this protein is 3-ketoacyl-CoA thiolase.